Consider the following 376-residue polypeptide: Protein FhaE (376 aa).

The signal sequence occupies residues 1 to 37 (MSQIFADRRAAVPARVISFCGAALAVWAGLAVQPAMA).

This chain is Protein FhaE (fhaE), found in Bordetella pertussis (strain Tohama I / ATCC BAA-589 / NCTC 13251).